Consider the following 97-residue polypeptide: Down syndrome critical region protein 8 (97 aa).

In terms of tissue distribution, expressed in numerous tissues; not found in breast, heart, small intestine and liver. Isoform 1: Predominantly expressed in the testis. Isoform 3: Predominantly expressed in the testis, at lower level in the placenta, during malignant progression of melanocytic tumors and in several tumors of varying origins. Isoform 4: Predominantly expressed in the testis, at lower level in the placenta, during malignant progression of melanocytic tumors and in several tumors of varying origins. Isoform 5: Predominantly expressed in the testis. Isoform 6: Predominantly expressed in the testis.

The sequence is that of Down syndrome critical region protein 8 from Homo sapiens (Human).